A 326-amino-acid polypeptide reads, in one-letter code: Ankyrin repeat domain-containing protein 9 (326 aa).

Positions 1 to 20 (MPWDTRPGRSANGGPEGPGA) are disordered. An ANK 1 repeat occupies 70-99 (SPSEALLYALVHDHQAYAHYLLATFPRCAL). Positions 108–109 (CC) match the Important role in both nutrient sensing and binding/regulation of IMPDH2 motif. ANK repeat units follow at residues 111–140 (APGP…DFPV) and 157–186 (GGGT…SPGL).

Part of an E3 ubiquitin-protein ligase complex with Elongin BC (ELOB and ELOC), CUL5 and ANKRD9. Interacts with IMPDH2; leading to ubiquitination of IMPDH2 and its subsequent proteasomal degradation.

The protein localises to the cytoplasmic vesicle. It localises to the cytoplasm. Its subcellular location is the cytosol. Its pathway is protein modification; protein ubiquitination. In terms of biological role, substrate receptor subunit of a cullin-RING superfamily E3 ligase complex (CUL5-based E3 ubiquitin ligase complex) which mediates the ubiquitination and subsequent proteasomal degradation of target proteins. Depending of the metabolic state of the cell, promotes the proteasomal degradation of IMPDH2, the rate-limiting enzyme in GTP biosynthesis or protects IMPDH2 by stabilizing IMPDH2 filaments assembly. Implicated in different cellular processes, like copper homeostasis and cell proliferation. This Mus musculus (Mouse) protein is Ankyrin repeat domain-containing protein 9 (Ankrd9).